Reading from the N-terminus, the 76-residue chain is Defensin-like protein 5 (76 aa).

Residues 1–29 (MKVSPRLNSALLLLFMILATVMGLVTVEA) form the signal peptide. Cystine bridges form between cysteine 32–cysteine 76, cysteine 43–cysteine 63, cysteine 49–cysteine 70, and cysteine 53–cysteine 72.

This sequence belongs to the DEFL family.

The protein resides in the secreted. Its function is as follows. Confers broad-spectrum resistance to pathogens. The sequence is that of Defensin-like protein 5 (PDF2.4) from Arabidopsis thaliana (Mouse-ear cress).